The following is an 82-amino-acid chain: Large ribosomal subunit protein uL23 (82 aa).

The protein belongs to the universal ribosomal protein uL23 family. In terms of assembly, part of the 50S ribosomal subunit. Contacts protein L29.

Functionally, binds to 23S rRNA. One of the proteins that surrounds the polypeptide exit tunnel on the outside of the ribosome. The protein is Large ribosomal subunit protein uL23 of Methanosarcina barkeri (strain Fusaro / DSM 804).